The primary structure comprises 260 residues: Phosphonates import ATP-binding protein PhnC 2 (260 aa).

Residues Ile4 to Arg245 form the ABC transporter domain. Position 37-44 (Gly37–Ser44) interacts with ATP.

This sequence belongs to the ABC transporter superfamily. Phosphonates importer (TC 3.A.1.9.1) family. The complex is composed of two ATP-binding proteins (PhnC), two transmembrane proteins (PhnE) and a solute-binding protein (PhnD).

It is found in the cell inner membrane. The catalysed reaction is phosphonate(out) + ATP + H2O = phosphonate(in) + ADP + phosphate + H(+). In terms of biological role, part of the ABC transporter complex PhnCDE involved in phosphonates import. Responsible for energy coupling to the transport system. The sequence is that of Phosphonates import ATP-binding protein PhnC 2 from Trichodesmium erythraeum (strain IMS101).